The sequence spans 71 residues: MTGVESARDAYIAQGNNCVYQCALNSSCNELCTKNGAKSGYCQWFGKHGNACWCIELPDNVPIRIQGKCQR.

The first 6 residues, 1–6 (MTGVES), serve as a signal peptide directing secretion. Residues 8–70 (RDAYIAQGNN…VPIRIQGKCQ (63 aa)) enclose the LCN-type CS-alpha/beta domain. 4 disulfide bridges follow: C18/C69, C22/C42, C28/C52, and C32/C54. A propeptide (removed by a carboxypeptidase) is located at residue R71.

This sequence belongs to the long (4 C-C) scorpion toxin superfamily. Sodium channel inhibitor family. Alpha subfamily. As to expression, expressed by the venom gland.

Its subcellular location is the secreted. In terms of biological role, alpha toxins bind voltage-independently at site-3 of sodium channels (Nav) and inhibit the inactivation of the activated channels, thereby blocking neuronal transmission. The protein is Sodium channel neurotoxin MeuNaTxalpha-12 of Mesobuthus eupeus (Lesser Asian scorpion).